The primary structure comprises 291 residues: S-adenosylmethionine uptake transporter (291 aa).

10 helical membrane passes run Ala-4 to Ala-24, Val-41 to Gly-61, Ile-74 to Leu-91, Thr-98 to Leu-118, Asn-121 to Leu-141, Phe-148 to Ile-168, Met-178 to Ala-198, Leu-206 to Leu-226, Ala-237 to Phe-257, and Phe-260 to Ile-280. EamA domains lie at Ser-21–Leu-141 and Ile-160–Ile-280.

This sequence belongs to the drug/metabolite transporter (DMT) superfamily. 10 TMS drug/metabolite exporter (DME) (TC 2.A.7.3) family.

It localises to the cell inner membrane. In terms of biological role, transports S-adenosylmethionine. This is S-adenosylmethionine uptake transporter (sam) from Rickettsia bellii (strain RML369-C).